Here is a 222-residue protein sequence, read N- to C-terminus: Pro-opiomelanocortin (222 aa).

Positions Met-1–Gly-18 are cleaved as a signal peptide. Positions Ala-19–Ser-90 are excised as a propeptide. Disordered stretches follow at residues Ile-56–His-98 and Glu-148–Lys-170. The segment covering Pro-70–Ser-93 has biased composition (low complexity). Over residues Glu-148–Glu-162 the composition is skewed to acidic residues.

It belongs to the POMC family. In terms of processing, specific enzymatic cleavages at paired basic residues yield the different active peptides.

It is found in the secreted. Functionally, stimulates the adrenal glands to release cortisol. In terms of biological role, anorexigenic peptide. Increases the pigmentation of skin by increasing melanin production in melanocytes. Its function is as follows. Increases the pigmentation of skin by increasing melanin production in melanocytes. Endogenous orexigenic opiate. Functionally, endogenous opiate. This Thunnus obesus (Bigeye tuna) protein is Pro-opiomelanocortin (pomc).